Reading from the N-terminus, the 1286-residue chain is MQKGNIRIAIDKGGTFTDCVGNIGTGKQEHDTVIKLLSVDPKNYPDAPLEGIRRLLEVLEHKTIPRGIPLDISNVRSLRMGTTLATNCALERNGERCAFITTKGFKDSLLIGDQTRPDIFNLNIKKVVPLYDTVVEIDERVTLEDFSEDPYFTKSSPNEQEGILEGNSGEMVRVIKKPDESSVRSILKVLYASGIKSIAIAFLHSYTFPDHERIVGNIAREIGFSHVSLSSEVSPMIKFLPRAHSSVADAYLTPVIKKYLNSISAGLSHAEDTHIQFMQSDGGLVDGGKFSGLKSILSGPAGGVIGYSSTCYDKNNNIPLIGFDMGGTSTDVSRYGDGRLEHVFETVTAGIIIQSPQLDIHTVAAGGSSILSWKNGLFRVGPDSAAADPGPAAYRKGGPLTITDANLFLGRLVPEFFPKIFGPNEDESLDLETTTLKFRELTDVINKDLNSNLTMEEVAYGFIKVANECMARPVRAITEAKGHVVSQHRLVSFGGAGGQHAIAVADSLGIDTVLIHRYSSILSAYGIFLADVIEENQEPCSFILGEPETILKVKKRFLELSKNSIKNLLSQSFSREDIVLERYLNLRYEGTETSLMILQKYDDQWNFREWFSEAHKKEFGFSFDDKRIIIDDIRIRAIGKSGVRKEKTVDEQLIEISHFKKADVSKDASFTQKAYFDNKWVDTAVFKIDDLPAGTIIEGPAILADGTQTNIILPNSQATILNSHIFIKINQKAAKTLSKSGYELDIDPILLSIFSHRFMDIALQMGTQLRKTSVSTNVKERLDFSCALFDSKGNLVANAPHVPVHLGSMSTCISAQAKLWEGKLKPGDVLITNHPDIGGTHLPDITVITPSFSSTGELIFYVASRAHHADIGGILPGSVPPNSKELYEEGTAIYSELVVKEGIFQEELIYKLFVEDPGKYPGCSGSRRFSDNISDLKAQVAANTKGIQLIGSLTKEYDLATILKYMAAIQTNASESIKKMLAKMVEHFGTTKFSGEDRLDDGSLIKLQVIIRPEKEEYIFNFDGTSPQVYGNLNAPEAITNSAILYCLRCLVGEDIPLNQGCLKPLTIKIPAGSLLSPRSGAAVVGGNVLTSQRVTDVILKTFNVMADSQGDCNNFTFGTGGNSGNKTDKQIKGFGYYETICGGSGAGADSWRGSGWNGSDAVHTNMTNTRMTDTEVFERRYPVLLKEFSIRRGSGGKGKYTGGNGVVRDVQFRKAVTASILSERRVIGPHGIKGGQDGSRGENLWVRHSTGALINVGGKNTIYAQPGDRFIIKTPGGGGFGQYKD.

A phosphoserine mark is found at serine 930 and serine 1077.

It belongs to the oxoprolinase family. In terms of assembly, homodimer.

It is found in the cytoplasm. The catalysed reaction is 5-oxo-L-proline + ATP + 2 H2O = L-glutamate + ADP + phosphate + H(+). Its function is as follows. Catalyzes the cleavage of 5-oxo-L-proline to form L-glutamate coupled to the hydrolysis of ATP to ADP and inorganic phosphate. The chain is 5-oxoprolinase (OXP1) from Saccharomyces cerevisiae (strain ATCC 204508 / S288c) (Baker's yeast).